We begin with the raw amino-acid sequence, 79 residues long: Translational regulator CsrA (79 aa).

Belongs to the CsrA/RsmA family. As to quaternary structure, homodimer; the beta-strands of each monomer intercalate to form a hydrophobic core, while the alpha-helices form wings that extend away from the core.

It localises to the cytoplasm. Its function is as follows. A translational regulator that binds mRNA to regulate translation initiation and/or mRNA stability. Usually binds in the 5'-UTR at or near the Shine-Dalgarno sequence preventing ribosome-binding, thus repressing translation. Its main target seems to be the major flagellin gene, while its function is anatagonized by FliW. The sequence is that of Translational regulator CsrA from Helicobacter hepaticus (strain ATCC 51449 / 3B1).